A 392-amino-acid chain; its full sequence is Tryptophan synthase beta chain (392 aa).

Lys86 is modified (N6-(pyridoxal phosphate)lysine).

Belongs to the TrpB family. Tetramer of two alpha and two beta chains. Requires pyridoxal 5'-phosphate as cofactor.

The catalysed reaction is (1S,2R)-1-C-(indol-3-yl)glycerol 3-phosphate + L-serine = D-glyceraldehyde 3-phosphate + L-tryptophan + H2O. It functions in the pathway amino-acid biosynthesis; L-tryptophan biosynthesis; L-tryptophan from chorismate: step 5/5. In terms of biological role, the beta subunit is responsible for the synthesis of L-tryptophan from indole and L-serine. The chain is Tryptophan synthase beta chain from Methanocorpusculum labreanum (strain ATCC 43576 / DSM 4855 / Z).